A 196-amino-acid polypeptide reads, in one-letter code: Protein TEX261 (196 aa).

The next 5 helical transmembrane spans lie at 3-23, 42-62, 70-90, 97-117, and 125-145; these read FMYL…TLAV, SRII…LYVF, IGVG…FPFI, FILS…FFAE, and VLAY…VSLS.

It belongs to the SVP26 family.

The protein resides in the membrane. This chain is Protein TEX261 (TEX261), found in Pongo abelii (Sumatran orangutan).